Consider the following 260-residue polypeptide: tRNA pseudouridine synthase A (260 aa).

Asp-52 serves as the catalytic Nucleophile. Tyr-111 is a substrate binding site.

The protein belongs to the tRNA pseudouridine synthase TruA family. Homodimer.

It carries out the reaction uridine(38/39/40) in tRNA = pseudouridine(38/39/40) in tRNA. Functionally, formation of pseudouridine at positions 38, 39 and 40 in the anticodon stem and loop of transfer RNAs. The polypeptide is tRNA pseudouridine synthase A (Roseobacter denitrificans (strain ATCC 33942 / OCh 114) (Erythrobacter sp. (strain OCh 114))).